The chain runs to 607 residues: Elongation factor 4 (607 aa).

A tr-type G domain is found at 11–193 (SKIRNFSIIA…QIVEKVPAPT (183 aa)). GTP is bound by residues 23 to 28 (DHGKST) and 140 to 143 (NKID).

This sequence belongs to the TRAFAC class translation factor GTPase superfamily. Classic translation factor GTPase family. LepA subfamily.

The protein localises to the cell membrane. The catalysed reaction is GTP + H2O = GDP + phosphate + H(+). Functionally, required for accurate and efficient protein synthesis under certain stress conditions. May act as a fidelity factor of the translation reaction, by catalyzing a one-codon backward translocation of tRNAs on improperly translocated ribosomes. Back-translocation proceeds from a post-translocation (POST) complex to a pre-translocation (PRE) complex, thus giving elongation factor G a second chance to translocate the tRNAs correctly. Binds to ribosomes in a GTP-dependent manner. The polypeptide is Elongation factor 4 (Bacillus anthracis (strain CDC 684 / NRRL 3495)).